The sequence spans 1416 residues: K homology domain-containing protein 4 (1416 aa).

Disordered regions lie at residues 25-76 (NPNG…TSMR), 108-174 (KAEA…TRSS), 196-225 (VNSSSTTHSASNSISANHVQQDRGISLSQS), 255-320 (QNDE…FPGR), and 341-385 (SSLN…MPKP). Low complexity-rich tracts occupy residues 196–213 (VNSSSTTHSASNSISANH), 273–285 (QSSFSSLQSLDQL), and 341–350 (SSLNPPASGS). A compositionally biased stretch (polar residues) spans 357-369 (GLSSAQPLRSPQP). KH domains lie at 412-504 (FKST…VILD), 508-594 (GLRS…QVSM), 747-816 (FEVR…EELP), 817-892 (AEMS…SVME), and 900-968 (DYIS…DHVP). Disordered regions lie at residues 1215–1240 (AGVSVPTSGGIQFPSQPSLHQQSGHR) and 1289–1416 (HASG…FDRA). Over residues 1219–1239 (VPTSGGIQFPSQPSLHQQSGH) the composition is skewed to polar residues. Over residues 1343-1374 (QQQAQQQLQYQQQQQQQQQQQQQPGYGMPHQP) the composition is skewed to low complexity. Residues 1391 to 1402 (RNTQNPDSTTMD) are compositionally biased toward polar residues.

Functionally, RNA-binding protein that recognizes the sequence AUACCC via its tandem KH domains 3 and 4, probably in order to promote mRNA instability. Plays an essential role in filamentous growth and virulence. This chain is K homology domain-containing protein 4, found in Mycosarcoma maydis (Corn smut fungus).